The sequence spans 281 residues: Undecaprenyl-diphosphatase (281 aa).

Transmembrane regions (helical) follow at residues 49-69 (SANT…AWIF), 92-112 (LHIF…DDFI), 116-136 (LFSV…MIAA), 152-172 (MTYK…WPGF), 196-216 (TFIM…ASNI), 224-244 (ILFY…SIRL), and 257-277 (FAIY…GFGI).

This sequence belongs to the UppP family.

Its subcellular location is the cell membrane. It catalyses the reaction di-trans,octa-cis-undecaprenyl diphosphate + H2O = di-trans,octa-cis-undecaprenyl phosphate + phosphate + H(+). Functionally, catalyzes the dephosphorylation of undecaprenyl diphosphate (UPP). Confers resistance to bacitracin. This chain is Undecaprenyl-diphosphatase, found in Macrococcus caseolyticus (strain JCSC5402) (Macrococcoides caseolyticum).